The following is a 466-amino-acid chain: Zinc finger protein ZIC 3 (466 aa).

A compositionally biased stretch (polar residues) spans 65–80; it reads DLSSGQSSAFTPQGSG. Positions 65 to 103 are disordered; sequence DLSSGQSSAFTPQGSGYANALGHHHHHHHHHHASQVPTY. Residues 86-97 show a composition bias toward basic residues; that stretch reads GHHHHHHHHHHA. Residue Lys247 forms a Glycyl lysine isopeptide (Lys-Gly) (interchain with G-Cter in SUMO2) linkage. A C2H2-type 1; atypical zinc finger spans residues 250 to 285; it reads LSCKWIEEAQLSRPKKSCDRTFSTMHELVTHVTMEH. Residues 294-321 form a C2H2-type 2; atypical zinc finger; sequence HVCYWEECPREGKSFKAKYKLVNHIRVH. 2 consecutive short sequence motifs (nuclear localization signal) follow at residues 296–321 and 329–351; these read CYWEECPREGKSFKAKYKLVNHIRVH and CPFPGCGKIFARSENLKIHKRTH. C2H2-type zinc fingers lie at residues 327-351, 357-381, and 387-409; these read FPCPFPGCGKIFARSENLKIHKRTH, FKCEFEGCDRRFANSSDRKKHMHVH, and YICKVCDKSYTHPSSLRKHMKVH. The segment at 403-466 is disordered; that stretch reads RKHMKVHESQ…LPPNFNEWYV (64 aa). Residues 411 to 427 are compositionally biased toward low complexity; it reads SQGSDSSPAASSGYESS. The segment covering 434–454 has biased composition (polar residues); the sequence is SANSKDTTKTPSAVQTSTSHN.

It belongs to the GLI C2H2-type zinc-finger protein family. Interacts with KPNA1 and KPNA6. Interacts (via C2H2-type domains 3, 4 and 5) with GLI3; the interaction enhances its transcriptional activity. Interacts (via the C2H2-type domains 3, 4 and 5) with MDFIC (via the C2H2-type domains 3, 4 and 5); the interaction reduces its transcriptional activity. CNS. A high level expression is seen in the cerebellum.

The protein localises to the nucleus. It localises to the cytoplasm. Its function is as follows. Acts as a transcriptional activator. Required in the earliest stages in both axial midline development and left-right (LR) asymmetry specification. Binds to the minimal GLI-consensus sequence 5'-GGGTGGTC-3'. The sequence is that of Zinc finger protein ZIC 3 (Zic3) from Mus musculus (Mouse).